A 600-amino-acid chain; its full sequence is Proton channel OTOP1 (600 aa).

The tract at residues 1 to 50 (MPGDRGALSSPAASSGSPSAAPSGIAACPPPPSPLARASPQASGPRRGAS) is disordered. Topologically, residues 1 to 56 (MPGDRGALSSPAASSGSPSAAPSGIAACPPPPSPLARASPQASGPRRGASVPQKLA) are cytoplasmic. Positions 7–27 (ALSSPAASSGSPSAAPSGIAA) are enriched in low complexity. Residues 57–78 (ETLSSQYGLNVFVAGLLFLLAW) traverse the membrane as a helical segment. The Extracellular portion of the chain corresponds to 79 to 86 (AVHATGVG). A helical transmembrane segment spans residues 87 to 110 (KSDLLCVLTALMLLQLLWMLWYVG). The Cytoplasmic segment spans residues 111-128 (RSYMQRRLIRPKDTHAGA). The chain crosses the membrane as a helical span at residues 129–151 (RWLRGSITLFAFITIVLGCLKVA). At 152–161 (YFIGFSECLS) the chain is on the extracellular side. Residues 162–186 (ATEGVFPVTHAVHTLLQVYFLWGHA) traverse the membrane as a helical segment. Over 187 to 194 (KDIIMSFK) the chain is Cytoplasmic. A helical membrane pass occupies residues 195–221 (TLERFGVIHSVFTNLLLWANSVLNESK). Over 222-262 (HQLNEHKERLITLGFGNITIVLDDHTPQCNCTPPALCSALS) the chain is Extracellular. The helical transmembrane segment at 263-288 (HGIYYLYPFNIEYQILASTMLYVLWK) threads the bilayer. Residues 289–309 (NIGRRVDSSRHQKMQCRFDGV) lie on the Cytoplasmic side of the membrane. The helical transmembrane segment at 310–332 (LVGSVLGLTVLAATIAVVVVYMI) threads the bilayer. Residues 333 to 342 (HIGRSKSKSE) lie on the Extracellular side of the membrane. Residues 343-368 (SALIMFYLYAITVLLLMGAAGLVGSW) form a helical membrane-spanning segment. Topologically, residues 369-386 (IYRVDEKSLDESKNPARK) are cytoplasmic. A helical transmembrane segment spans residues 387–411 (LDADLLVATASGSWLLSWGSILAIA). At 412–421 (CAETRPPYTW) the chain is on the extracellular side. A helical transmembrane segment spans residues 422-442 (YNLPYSVLVIVEKYVQNIFII). At 443 to 532 (ESVHLEPEGV…QGGMKRRLLR (90 aa)) the chain is on the cytoplasmic side. A helical transmembrane segment spans residues 533-551 (NITAFLFLCNISLWIPPAF). Topologically, residues 552–569 (GCRPEYDNGLEEIVFGFE) are extracellular. The chain crosses the membrane as a helical span at residues 570 to 593 (PWIIVVNLAMPFSIFYRMHAAAAL). The Cytoplasmic portion of the chain corresponds to 594–600 (FEVYCKI).

This sequence belongs to the otopetrin family. Homodimer. Interacts with STAT1, independently of STAT1 phosphorylation status.

Its subcellular location is the cell membrane. The protein resides in the cell projection. It localises to the microvillus. It catalyses the reaction H(+)(in) = H(+)(out). Activated by both acid and alkali, with proton influx in response to extracellular acid and proton efflux during alkali stimulation. Inhibited by Zn(2+); this inhibition is thought to be pH-sensitive. Currents evoked in response to mild acid (pH 6.0) stimulus may also be mildly potentiated by exposure to Zn(2+). Activated by NH(4)Cl. Functionally, proton-selective ion channel. Biphasically modulated by acid and alkali, mediating proton influx and efflux in response to extracellular acid and base stimulation, respectively. Sour taste receptor, which carries inward currents in response to extracellular acidification. Sensor for ammonium chloride (NH(4)Cl) in taste receptor cells. NH(4)Cl acts by increasing the intracellular pH, thereby generating a driving force for proton entry through OTOP1 channel. Might also participate in alkaline sensation. Plays a role in the regulation of Ca(2+) flux in response to purigenic (ATP, ADP and UDP) stimuli, leading to increase in cytosolic Ca(2+) due to influx of extracellular calcium. May play this role by inhibiting P2Y purinoceptor-mediated Ca(2+) release in a Ca(2+)-dependent manner and promote an influx of Ca(2+) in response to ATP. Through this mechanism and possibly others, plays a role in the formation and function of calcium carbonate-based structures in the vestibular system of the inner ear, called otoconia, that sense gravity and linear acceleration. In obesity, may attenuate adipose tissue inflammation, through the negative regulation of IFNG signaling, hence may play an adaptive role in the maintainance of metabolic homeostasis. Following alkali activation, may also be permeable Na(+), K(+), Cs(+) and Li(+). The sequence is that of Proton channel OTOP1 from Rattus norvegicus (Rat).